The primary structure comprises 478 residues: Sialidase-4 (478 aa).

Positions 22–25 match the FRIP motif motif; the sequence is YRVP. Residues R23 and R43 each coordinate substrate. Residues D47 and D48 each act as proton acceptor in the active site. The BNR 1 repeat unit spans residues 127–138; it reads VTSCDAGLTWGS. Substrate-binding residues include Y177 and Y179. The BNR 2 repeat unit spans residues 200 to 211; that stretch reads FYSDDHGISWHC. Substrate contacts are provided by E222 and R238. Residues 247 to 258 form a BNR 3 repeat; it reads ALSADEGTSFLP. Disordered regions lie at residues 285–307 and 335–359; these read IEPQDDRWTGSPRNTPHSPCFNL and SRSPENHGLEPGSDGDKTSWTPECP. R383 serves as a coordination point for substrate. Residue Y413 is the Nucleophile of the active site. E434 is an active-site residue.

This sequence belongs to the glycosyl hydrolase 33 family. As to expression, highly expressed in brain, particularly in hippocampus, and at lower levels in liver and spleen. Expressed in hippocampal neurons (at protein level).

Its subcellular location is the cell membrane. The protein resides in the endoplasmic reticulum membrane. It localises to the microsome membrane. The protein localises to the mitochondrion inner membrane. It is found in the mitochondrion outer membrane. Its subcellular location is the cell projection. The protein resides in the neuron projection. It localises to the lysosome lumen. It carries out the reaction Hydrolysis of alpha-(2-&gt;3)-, alpha-(2-&gt;6)-, alpha-(2-&gt;8)- glycosidic linkages of terminal sialic acid residues in oligosaccharides, glycoproteins, glycolipids, colominic acid and synthetic substrates.. The catalysed reaction is a ganglioside GM3 + H2O = a beta-D-galactosyl-(1-&gt;4)-beta-D-glucosyl-(1&lt;-&gt;1)-ceramide + N-acetylneuraminate. It catalyses the reaction a ganglioside GM3 (d18:1(4E)) + H2O = a beta-D-Gal-(1-&gt;4)-beta-D-Glc-(1&lt;-&gt;1)-Cer(d18:1(4E)) + N-acetylneuraminate. The enzyme catalyses a ganglioside GM2 + H2O = a ganglioside GA2 + N-acetylneuraminate. It carries out the reaction a ganglioside GM2 (d18:1(4E)) + H2O = a ganglioside GA2 (d18:1(4E)) + N-acetylneuraminate. The catalysed reaction is a ganglioside GD1a + H2O = a ganglioside GM1 + N-acetylneuraminate. It catalyses the reaction a ganglioside GD1a (d18:1(4E)) + H2O = a ganglioside GM1 (d18:1(4E)) + N-acetylneuraminate. The enzyme catalyses a ganglioside GD3 + H2O = a ganglioside GM3 + N-acetylneuraminate. It carries out the reaction a ganglioside GD3 (d18:1(4E)) + H2O = a ganglioside GM3 (d18:1(4E)) + N-acetylneuraminate. Exo-alpha-sialidase that catalyzes the hydrolytic cleavage of the terminal sialic acid (N-acetylneuraminic acid, Neu5Ac) of a glycan moiety in the catabolism of glycolipids, glycoproteins and oligosacharides. Efficiently hydrolyzes gangliosides including alpha-(2-&gt;3)-sialylated GD1a and GM3 and alpha-(2-&gt;8)-sialylated GD3. Hydrolyzes poly-alpha-(2-&gt;8)-sialylated neural cell adhesion molecule NCAM1 likely at growth cones, suppressing neurite outgrowth in hippocampal neurons. May desialylate sialyl Lewis A and X antigens at the cell surface, down-regulating these glycan epitopes recognized by SELE/E selectin in the initiation of cell adhesion and extravasation. Has sialidase activity toward mucin, fetuin and sialyllactose. The sequence is that of Sialidase-4 (Neu4) from Mus musculus (Mouse).